The chain runs to 120 residues: Large ribosomal subunit protein uL18 (120 aa).

As to quaternary structure, part of the 50S ribosomal subunit; part of the 5S rRNA/L5/L18/L25 subcomplex. Contacts the 5S and 23S rRNAs.

Its function is as follows. This is one of the proteins that bind and probably mediate the attachment of the 5S RNA into the large ribosomal subunit, where it forms part of the central protuberance. This Rhodopseudomonas palustris (strain ATCC BAA-98 / CGA009) protein is Large ribosomal subunit protein uL18.